Here is a 44-residue protein sequence, read N- to C-terminus: Antimicrobial peptide 1b (44 aa).

The 42-residue stretch at 1–42 (AQKCGEQGRGAKCPNCLCCGRYGFCGSTPDYCGVGCQSQCRG) folds into the Chitin-binding type-1 domain. 5 cysteine pairs are disulfide-bonded: cysteine 4-cysteine 19, cysteine 13-cysteine 25, cysteine 16-cysteine 43, cysteine 18-cysteine 32, and cysteine 36-cysteine 40.

In terms of processing, contains 5 disulfide bonds.

In terms of biological role, binds chitin. Has antifungal activity against F.oxysporum 16/10 (IC(50)=4.1 uM) and B.sorokiniana 6/10 (IC(50)=2.7 uM). Inhibits germination of fungal spores. The protein is Antimicrobial peptide 1b of Leymus arenarius (Lyme grass).